The sequence spans 47 residues: uncharacterized protein (47 aa).

The ATP-cone domain occupies 2-47 (LRVRKRDGRLEEFSRAKIVRTCLRAGASKKIAEKVAEELKRGYTMG).

This is an uncharacterized protein from Archaeoglobus fulgidus (strain ATCC 49558 / DSM 4304 / JCM 9628 / NBRC 100126 / VC-16).